Here is a 388-residue protein sequence, read N- to C-terminus: Lipid-A-disaccharide synthase (388 aa).

It belongs to the LpxB family.

It carries out the reaction a lipid X + a UDP-2-N,3-O-bis[(3R)-3-hydroxyacyl]-alpha-D-glucosamine = a lipid A disaccharide + UDP + H(+). It participates in bacterial outer membrane biogenesis; LPS lipid A biosynthesis. Its function is as follows. Condensation of UDP-2,3-diacylglucosamine and 2,3-diacylglucosamine-1-phosphate to form lipid A disaccharide, a precursor of lipid A, a phosphorylated glycolipid that anchors the lipopolysaccharide to the outer membrane of the cell. The chain is Lipid-A-disaccharide synthase from Sulfurihydrogenibium sp. (strain YO3AOP1).